A 479-amino-acid polypeptide reads, in one-letter code: Cysteine--tRNA ligase (479 aa).

Residue Cys-28 coordinates Zn(2+). The short motif at 30–40 is the 'HIGH' region element; sequence PTVYDHAHLGH. Zn(2+) contacts are provided by Cys-207, His-232, and Glu-236. Positions 264–268 match the 'KMSKS' region motif; that stretch reads KMSKS. Residue Lys-267 participates in ATP binding.

The protein belongs to the class-I aminoacyl-tRNA synthetase family. Zn(2+) is required as a cofactor.

Its subcellular location is the cytoplasm. It catalyses the reaction tRNA(Cys) + L-cysteine + ATP = L-cysteinyl-tRNA(Cys) + AMP + diphosphate. This Methanococcus aeolicus (strain ATCC BAA-1280 / DSM 17508 / OCM 812 / Nankai-3) protein is Cysteine--tRNA ligase.